Consider the following 59-residue polypeptide: Putative zinc finger protein ORF59a (59 aa).

The C2H2-type; degenerate zinc-finger motif lies at 11 to 33 (YQCLRCGLTFRTKKQLIRHLVNT).

This Acidianus hospitalis (AFV-1) protein is Putative zinc finger protein ORF59a.